Consider the following 128-residue polypeptide: Glycine cleavage system H protein (128 aa).

One can recognise a Lipoyl-binding domain in the interval 24–106 (VYTVGITEHA…YAEGFLFQIK (83 aa)). At lysine 65 the chain carries N6-lipoyllysine.

It belongs to the GcvH family. The glycine cleavage system is composed of four proteins: P, T, L and H. The cofactor is (R)-lipoate.

Its function is as follows. The glycine cleavage system catalyzes the degradation of glycine. The H protein shuttles the methylamine group of glycine from the P protein to the T protein. The sequence is that of Glycine cleavage system H protein from Serratia proteamaculans (strain 568).